Consider the following 357-residue polypeptide: UDP-N-acetylglucosamine--N-acetylmuramyl-(pentapeptide) pyrophosphoryl-undecaprenol N-acetylglucosamine transferase (357 aa).

UDP-N-acetyl-alpha-D-glucosamine contacts are provided by residues 12-14 (TGG), N124, R163, S191, I245, 264-269 (ALTVSE), and Q290.

The protein belongs to the glycosyltransferase 28 family. MurG subfamily.

The protein resides in the cell inner membrane. The enzyme catalyses di-trans,octa-cis-undecaprenyl diphospho-N-acetyl-alpha-D-muramoyl-L-alanyl-D-glutamyl-meso-2,6-diaminopimeloyl-D-alanyl-D-alanine + UDP-N-acetyl-alpha-D-glucosamine = di-trans,octa-cis-undecaprenyl diphospho-[N-acetyl-alpha-D-glucosaminyl-(1-&gt;4)]-N-acetyl-alpha-D-muramoyl-L-alanyl-D-glutamyl-meso-2,6-diaminopimeloyl-D-alanyl-D-alanine + UDP + H(+). The protein operates within cell wall biogenesis; peptidoglycan biosynthesis. Cell wall formation. Catalyzes the transfer of a GlcNAc subunit on undecaprenyl-pyrophosphoryl-MurNAc-pentapeptide (lipid intermediate I) to form undecaprenyl-pyrophosphoryl-MurNAc-(pentapeptide)GlcNAc (lipid intermediate II). The chain is UDP-N-acetylglucosamine--N-acetylmuramyl-(pentapeptide) pyrophosphoryl-undecaprenol N-acetylglucosamine transferase from Nitrosospira multiformis (strain ATCC 25196 / NCIMB 11849 / C 71).